We begin with the raw amino-acid sequence, 1081 residues long: Disheveled-associated activator of morphogenesis 1-A (1081 aa).

The GBD/FH3 domain occupies 45-418 (LPVPPVEELD…QIVIQNEKGQ (374 aa)). Disordered regions lie at residues 455–476 (KEHN…AKTQ) and 519–615 (RTVC…PLKS). Positions 526–536 (PGGPPPPPGAP) are enriched in pro residues. Low complexity predominate over residues 538–547 (GPMSMPSGNF). Pro residues predominate over residues 548 to 585 (MPPPPPPPPPFPGGMAPPPPPPPPPPPPPGGPPPPPGL). Over residues 586-600 (PLLGAAPPGAPLGLS) the composition is skewed to low complexity. Residues 603–1012 (KKNIPQPKNP…EERRIRMEAQ (410 aa)) form the FH2 domain. An actin-binding region spans residues 696 to 705 (AQNCNILLSR). The segment covering 1013-1029 (LKEQRERERKARKAKEN) has biased composition (basic and acidic residues). 2 disordered regions span residues 1013 to 1038 (LKEQ…EFDD) and 1060 to 1081 (RKRI…KLNY). Residues 1030–1061 (GEEEGEFDDLVSALRSGEVFDKDLSKLKRNRK) form the DAD domain. Positions 1070–1081 (SSRERPVTKLNY) are enriched in basic and acidic residues.

It localises to the cytoplasm. Its subcellular location is the cytoskeleton. It is found in the cilium basal body. Functionally, binds to disheveled (dsh) and Rho, and mediates Wnt-induced dsh-Rho complex formation during gastrulation. May play a role as a scaffolding protein to recruit Rho-GDP and Rho-GEF, thereby enhancing Rho-GTP formation. Can direct nucleation and elongation of new actin filaments. Involved in building functional cilia. Involved in building functional cilia. Involved in the organization of the subapical actin network in multiciliated epithelial cells. The polypeptide is Disheveled-associated activator of morphogenesis 1-A (daam1-a) (Xenopus laevis (African clawed frog)).